The primary structure comprises 148 residues: UPF0179 protein Mboo_1959 (148 aa).

Belongs to the UPF0179 family.

The sequence is that of UPF0179 protein Mboo_1959 from Methanoregula boonei (strain DSM 21154 / JCM 14090 / 6A8).